The following is a 327-amino-acid chain: uncharacterized protein (327 aa).

The signal sequence occupies residues 1-24; the sequence is MKQPGFIRLATLALLSTLSFFSHG.

This is an uncharacterized protein from Salmonella typhimurium (strain LT2 / SGSC1412 / ATCC 700720).